The chain runs to 95 residues: Pyrimidine/purine nucleoside phosphorylase (95 aa).

It belongs to the nucleoside phosphorylase PpnP family.

It catalyses the reaction a purine D-ribonucleoside + phosphate = a purine nucleobase + alpha-D-ribose 1-phosphate. The catalysed reaction is adenosine + phosphate = alpha-D-ribose 1-phosphate + adenine. The enzyme catalyses cytidine + phosphate = cytosine + alpha-D-ribose 1-phosphate. It carries out the reaction guanosine + phosphate = alpha-D-ribose 1-phosphate + guanine. It catalyses the reaction inosine + phosphate = alpha-D-ribose 1-phosphate + hypoxanthine. The catalysed reaction is thymidine + phosphate = 2-deoxy-alpha-D-ribose 1-phosphate + thymine. The enzyme catalyses uridine + phosphate = alpha-D-ribose 1-phosphate + uracil. It carries out the reaction xanthosine + phosphate = alpha-D-ribose 1-phosphate + xanthine. Functionally, catalyzes the phosphorolysis of diverse nucleosides, yielding D-ribose 1-phosphate and the respective free bases. Can use uridine, adenosine, guanosine, cytidine, thymidine, inosine and xanthosine as substrates. Also catalyzes the reverse reactions. In Edwardsiella ictaluri (strain 93-146), this protein is Pyrimidine/purine nucleoside phosphorylase.